Consider the following 310-residue polypeptide: tRNA dimethylallyltransferase (310 aa).

Residue 14–21 (GPTASGKS) coordinates ATP. Substrate is bound at residue 16–21 (TASGKS). Interaction with substrate tRNA stretches follow at residues 39-42 (DSMQ) and 163-167 (QRIVR).

It belongs to the IPP transferase family. Monomer. Mg(2+) is required as a cofactor.

The enzyme catalyses adenosine(37) in tRNA + dimethylallyl diphosphate = N(6)-dimethylallyladenosine(37) in tRNA + diphosphate. Catalyzes the transfer of a dimethylallyl group onto the adenine at position 37 in tRNAs that read codons beginning with uridine, leading to the formation of N6-(dimethylallyl)adenosine (i(6)A). This is tRNA dimethylallyltransferase from Brucella abortus (strain S19).